We begin with the raw amino-acid sequence, 279 residues long: Putative pyruvate, phosphate dikinase regulatory protein (279 aa).

Position 152-159 (152-159 (GVSRTSKS)) interacts with ADP.

This sequence belongs to the pyruvate, phosphate/water dikinase regulatory protein family. PDRP subfamily.

It catalyses the reaction N(tele)-phospho-L-histidyl/L-threonyl-[pyruvate, phosphate dikinase] + ADP = N(tele)-phospho-L-histidyl/O-phospho-L-threonyl-[pyruvate, phosphate dikinase] + AMP + H(+). The enzyme catalyses N(tele)-phospho-L-histidyl/O-phospho-L-threonyl-[pyruvate, phosphate dikinase] + phosphate + H(+) = N(tele)-phospho-L-histidyl/L-threonyl-[pyruvate, phosphate dikinase] + diphosphate. Its function is as follows. Bifunctional serine/threonine kinase and phosphorylase involved in the regulation of the pyruvate, phosphate dikinase (PPDK) by catalyzing its phosphorylation/dephosphorylation. The polypeptide is Putative pyruvate, phosphate dikinase regulatory protein (Anaplasma marginale (strain Florida)).